The chain runs to 1368 residues: DNA-directed RNA polymerase subunit beta (1368 aa).

Belongs to the RNA polymerase beta chain family. As to quaternary structure, the RNAP catalytic core consists of 2 alpha, 1 beta, 1 beta' and 1 omega subunit. When a sigma factor is associated with the core the holoenzyme is formed, which can initiate transcription.

The enzyme catalyses RNA(n) + a ribonucleoside 5'-triphosphate = RNA(n+1) + diphosphate. DNA-dependent RNA polymerase catalyzes the transcription of DNA into RNA using the four ribonucleoside triphosphates as substrates. This chain is DNA-directed RNA polymerase subunit beta, found in Legionella pneumophila subsp. pneumophila (strain Philadelphia 1 / ATCC 33152 / DSM 7513).